A 293-amino-acid chain; its full sequence is Nucleotide-binding protein BC_5156 (293 aa).

Residue 14 to 21 coordinates ATP; the sequence is GMSGAGKT. 65 to 68 is a binding site for GTP; sequence DLRG.

This sequence belongs to the RapZ-like family.

Displays ATPase and GTPase activities. The sequence is that of Nucleotide-binding protein BC_5156 from Bacillus cereus (strain ATCC 14579 / DSM 31 / CCUG 7414 / JCM 2152 / NBRC 15305 / NCIMB 9373 / NCTC 2599 / NRRL B-3711).